The following is a 543-amino-acid chain: CTP synthase (543 aa).

The amidoligase domain stretch occupies residues 1-265; the sequence is MTRFVFITGG…DTEVLRHFGL (265 aa). Residue Ser-13 participates in CTP binding. Residue Ser-13 participates in UTP binding. 14-19 lines the ATP pocket; the sequence is SLGKGI. An L-glutamine-binding site is contributed by Tyr-54. Asp-71 lines the ATP pocket. Residues Asp-71 and Glu-139 each coordinate Mg(2+). CTP contacts are provided by residues 146–148, 186–191, and Lys-222; these read DIE and KTKPTQ. UTP is bound by residues 186–191 and Lys-222; that span reads KTKPTQ. The Glutamine amidotransferase type-1 domain occupies 291-542; that stretch reads RIAVVGKYTA…VGAAVKKMRL (252 aa). L-glutamine is bound at residue Gly-354. Residue Cys-381 is the Nucleophile; for glutamine hydrolysis of the active site. L-glutamine is bound by residues 382-385, Glu-405, and Arg-470; that span reads FGMQ. Residues His-515 and Glu-517 contribute to the active site.

Belongs to the CTP synthase family. In terms of assembly, homotetramer.

The catalysed reaction is UTP + L-glutamine + ATP + H2O = CTP + L-glutamate + ADP + phosphate + 2 H(+). It carries out the reaction L-glutamine + H2O = L-glutamate + NH4(+). The enzyme catalyses UTP + NH4(+) + ATP = CTP + ADP + phosphate + 2 H(+). It functions in the pathway pyrimidine metabolism; CTP biosynthesis via de novo pathway; CTP from UDP: step 2/2. With respect to regulation, allosterically activated by GTP, when glutamine is the substrate; GTP has no effect on the reaction when ammonia is the substrate. The allosteric effector GTP functions by stabilizing the protein conformation that binds the tetrahedral intermediate(s) formed during glutamine hydrolysis. Inhibited by the product CTP, via allosteric rather than competitive inhibition. Catalyzes the ATP-dependent amination of UTP to CTP with either L-glutamine or ammonia as the source of nitrogen. Regulates intracellular CTP levels through interactions with the four ribonucleotide triphosphates. This is CTP synthase from Gluconacetobacter diazotrophicus (strain ATCC 49037 / DSM 5601 / CCUG 37298 / CIP 103539 / LMG 7603 / PAl5).